We begin with the raw amino-acid sequence, 90 residues long: MNSNLLLPDKNLRMQREQWKWTQMTLIKTHCKPGNKQCQHWRTNSQTTREGWQMLCPGKKWILNLLTRLGLNLMTTSRRDQALGMEMSLM.

The protein belongs to the hantavirus NS-S protein family.

The protein resides in the host cytoplasm. It is found in the host perinuclear region. Its function is as follows. Antagonizes host type-I IFN signaling pathway. In Homo sapiens (Human), this protein is Non-structural protein NS-S (N).